Reading from the N-terminus, the 234-residue chain is 2-C-methyl-D-erythritol 4-phosphate cytidylyltransferase (234 aa).

Belongs to the IspD/TarI cytidylyltransferase family. IspD subfamily.

It carries out the reaction 2-C-methyl-D-erythritol 4-phosphate + CTP + H(+) = 4-CDP-2-C-methyl-D-erythritol + diphosphate. It participates in isoprenoid biosynthesis; isopentenyl diphosphate biosynthesis via DXP pathway; isopentenyl diphosphate from 1-deoxy-D-xylulose 5-phosphate: step 2/6. Its function is as follows. Catalyzes the formation of 4-diphosphocytidyl-2-C-methyl-D-erythritol from CTP and 2-C-methyl-D-erythritol 4-phosphate (MEP). This Thermosynechococcus vestitus (strain NIES-2133 / IAM M-273 / BP-1) protein is 2-C-methyl-D-erythritol 4-phosphate cytidylyltransferase.